The sequence spans 999 residues: MADKVRRQRPRRRVCWALVAVLLADLLALSDTLAVMSVDLGSESMKVAIVKPGVPMEIVLNKESRRKTPVIVTLKENERFFGDSAASMAIKNPKATLRYFQHLLGKQADNPHVALYQARFPEHELTFDPQRQTVHFQISSQLQFSPEEVLGMVLNYSRSLAEDFAEQPIKDAVITVPVFFNQAERRAVLQAARMAGLKVLQLINDNTATALSYGVFRRKDINTTAQNIMFYDMGSGSTVCTIVTYQMVKTKEAGMQPQLQIRGVGFDRTLGGLEMELRLRERLAGLFNEQRKGQRAKDVRENPRAMAKLLREANRLKTVLSANADHMAQIEGLMDDVDFKAKVTRVEFEELCADLFERVPGPVQQALQSAEMSLDEIEQVILVGGATRVPRVQEVLLKAVGKEELGKNINADEAAAMGAVYQAAALSKAFKVKPFVVRDAVVYPILVEFTREVEEEPGIHSLKHNKRVLFSRMGPYPQRKVITFNRYSHDFNFHINYGDLGFLGPEDLRVFGSQNLTTVKLKGVGDSFKKYPDYESKGIKAHFNLDESGVLSLDRVESVFETLVEDSAEEESTLTKLGNTISSLFGGGTTPDAKENGTDTVQEEEESPAEGSKDEPGEQVELKEEAEAPVEDGSQPPPPEPKGDATPEGEKATEKENGDKSEAQKPSEKAEAGPEGVAPAPEGEKKQKPARKRRMVEEIGVELVVLDLPDLPEDKLAQSVQKLQDLTLRDLEKQEREKAANSLEAFIFETQDKLYQPEYQEVSTEEQREEISGKLSAASTWLEDEGVGATTVMLKEKLAELRKLCQGLFFRVEERKKWPERLSALDNLLNHSSMFLKGARLIPEMDQIFTEVEMTTLEKVINETWAWKNATLAEQAKLPATEKPVLLSKDIEAKMMALDREVQYLLNKAKFTKPRPRPKDKNGTRAEPPLNASASDQGEKVIPPAGQTEDAEPISEPEKVETGSEPGDTEPLELGGPGAEPEQKEQSTGQKRPLKNDEL.

Positions 1–32 (MADKVRRQRPRRRVCWALVAVLLADLLALSDT) are cleaved as a signal peptide. N-linked (GlcNAc...) asparagine glycosylation is found at asparagine 155, asparagine 222, and asparagine 515. Serine 567 carries the post-translational modification Phosphoserine. Positions 578–694 (GNTISSLFGG…KKQKPARKRR (117 aa)) are disordered. A glycan (N-linked (GlcNAc...) asparagine) is linked at asparagine 596. Basic and acidic residues-rich tracts occupy residues 611–626 (GSKDEPGEQVELKEEA) and 641–672 (PKGDATPEGEKATEKENGDKSEAQKPSEKAEA). Residues asparagine 830, asparagine 862, and asparagine 869 are each glycosylated (N-linked (GlcNAc...) asparagine). Lysine 883 is modified (N6-acetyllysine). Residues 909 to 999 (AKFTKPRPRP…QKRPLKNDEL (91 aa)) form a disordered region. N-linked (GlcNAc...) asparagine glycans are attached at residues asparagine 922 and asparagine 931. The short motif at 996–999 (NDEL) is the Prevents secretion from ER element.

It belongs to the heat shock protein 70 family. As to quaternary structure, part of a large chaperone multiprotein complex comprising DNAJB11, HSP90B1, HSPA5, HYOU, PDIA2, PDIA4, PDIA6, PPIB, SDF2L1, UGGT1 and very small amounts of ERP29, but not, or at very low levels, CALR nor CANX. In terms of tissue distribution, highly expressed in tissues that contain well-developed endoplasmic reticulum and synthesize large amounts of secretory proteins. Highly expressed in liver and pancreas and lower expression in brain and kidney. Also expressed in macrophages within aortic atherosclerotic plaques, and in breast cancers.

Its subcellular location is the endoplasmic reticulum lumen. Functionally, has a pivotal role in cytoprotective cellular mechanisms triggered by oxygen deprivation. Promotes HSPA5/BiP-mediated ATP nucleotide exchange and thereby activates the unfolded protein response (UPR) pathway in the presence of endoplasmic reticulum stress. May play a role as a molecular chaperone and participate in protein folding. This Homo sapiens (Human) protein is Hypoxia up-regulated protein 1 (HYOU1).